Here is a 401-residue protein sequence, read N- to C-terminus: Tryptophan synthase beta chain (401 aa).

Lys92 bears the N6-(pyridoxal phosphate)lysine mark.

Belongs to the TrpB family. In terms of assembly, tetramer of two alpha and two beta chains. Pyridoxal 5'-phosphate is required as a cofactor.

It catalyses the reaction (1S,2R)-1-C-(indol-3-yl)glycerol 3-phosphate + L-serine = D-glyceraldehyde 3-phosphate + L-tryptophan + H2O. It participates in amino-acid biosynthesis; L-tryptophan biosynthesis; L-tryptophan from chorismate: step 5/5. Its function is as follows. The beta subunit is responsible for the synthesis of L-tryptophan from indole and L-serine. This Ruthia magnifica subsp. Calyptogena magnifica protein is Tryptophan synthase beta chain.